The chain runs to 535 residues: Light-independent protochlorophyllide reductase subunit B (535 aa).

[4Fe-4S] cluster is bound at residue Asp36. Asp292 functions as the Proton donor in the catalytic mechanism. 428–429 (GL) is a binding site for substrate.

This sequence belongs to the ChlB/BchB/BchZ family. Protochlorophyllide reductase is composed of three subunits; BchL, BchN and BchB. Forms a heterotetramer of two BchB and two BchN subunits. Requires [4Fe-4S] cluster as cofactor.

The catalysed reaction is chlorophyllide a + oxidized 2[4Fe-4S]-[ferredoxin] + 2 ADP + 2 phosphate = protochlorophyllide a + reduced 2[4Fe-4S]-[ferredoxin] + 2 ATP + 2 H2O. The protein operates within porphyrin-containing compound metabolism; bacteriochlorophyll biosynthesis (light-independent). In terms of biological role, component of the dark-operative protochlorophyllide reductase (DPOR) that uses Mg-ATP and reduced ferredoxin to reduce ring D of protochlorophyllide (Pchlide) to form chlorophyllide a (Chlide). This reaction is light-independent. The NB-protein (BchN-BchB) is the catalytic component of the complex. The polypeptide is Light-independent protochlorophyllide reductase subunit B (Chlorobaculum parvum (strain DSM 263 / NCIMB 8327) (Chlorobium vibrioforme subsp. thiosulfatophilum)).